The following is a 688-amino-acid chain: Translation initiation factor IF-2 (688 aa).

2 stretches are compositionally biased toward basic and acidic residues: residues 53–62 (GKEKSEKTKE) and 86–95 (KRDDKNEKVN). Residues 53–100 (GKEKSEKTKEEDDEIETTAKNPIKESMNNKKSNKRDDKNEKVNTENAE) are disordered. Residues 187-354 (KRSPIITVMG…MILLSSEILE (168 aa)) form the tr-type G domain. The segment at 196 to 203 (GHVDHGKT) is G1. A GTP-binding site is contributed by 196–203 (GHVDHGKT). Residues 221-225 (GITQH) are G2. The tract at residues 242–245 (DTPG) is G3. Residues 242–246 (DTPGH) and 296–299 (NKID) contribute to the GTP site. A G4 region spans residues 296-299 (NKID). The G5 stretch occupies residues 332–334 (SAH).

Belongs to the TRAFAC class translation factor GTPase superfamily. Classic translation factor GTPase family. IF-2 subfamily.

The protein resides in the cytoplasm. Functionally, one of the essential components for the initiation of protein synthesis. Protects formylmethionyl-tRNA from spontaneous hydrolysis and promotes its binding to the 30S ribosomal subunits. Also involved in the hydrolysis of GTP during the formation of the 70S ribosomal complex. The protein is Translation initiation factor IF-2 of Clostridium botulinum (strain Loch Maree / Type A3).